We begin with the raw amino-acid sequence, 299 residues long: 4-hydroxy-tetrahydrodipicolinate synthase 2 (299 aa).

T54 serves as a coordination point for pyruvate. Y142 acts as the Proton donor/acceptor in catalysis. Residue K170 is the Schiff-base intermediate with substrate of the active site. Residue V210 participates in pyruvate binding.

Belongs to the DapA family. In terms of assembly, homotetramer; dimer of dimers.

It localises to the cytoplasm. The enzyme catalyses L-aspartate 4-semialdehyde + pyruvate = (2S,4S)-4-hydroxy-2,3,4,5-tetrahydrodipicolinate + H2O + H(+). The protein operates within amino-acid biosynthesis; L-lysine biosynthesis via DAP pathway; (S)-tetrahydrodipicolinate from L-aspartate: step 3/4. Its function is as follows. Catalyzes the condensation of (S)-aspartate-beta-semialdehyde [(S)-ASA] and pyruvate to 4-hydroxy-tetrahydrodipicolinate (HTPA). This chain is 4-hydroxy-tetrahydrodipicolinate synthase 2, found in Streptomyces coelicolor (strain ATCC BAA-471 / A3(2) / M145).